The primary structure comprises 233 residues: Guanylate kinase (233 aa).

The Guanylate kinase-like domain maps to 3–184; that stretch reads GTIFIISAPS…AVEQLRAIVL (182 aa). Residue 10-17 participates in ATP binding; the sequence is APSGSGKS.

Belongs to the guanylate kinase family.

Its subcellular location is the cytoplasm. It catalyses the reaction GMP + ATP = GDP + ADP. In terms of biological role, essential for recycling GMP and indirectly, cGMP. The chain is Guanylate kinase from Koribacter versatilis (strain Ellin345).